Reading from the N-terminus, the 58-residue chain is MIFTVINRSLEVGDIRMNGVSSSSVFHIGDTESIYLSSIFDTPPESLIIGPFAPLAPE.

Required for the formation of functionally normal spores. Could be involved in the establishment of normal spore coat structure and/or permeability, which allows the access of germinants to their receptor. This Bacillus subtilis (strain 168) protein is Probable spore germination protein GerPD (gerPD).